A 381-amino-acid polypeptide reads, in one-letter code: Cytochrome b (381 aa).

4 helical membrane passes run 34-54 (FGSLLGLCLIIQILTGLFLAM), 78-99 (WLIRNIHANGASLFFICIYLHI), 114-134 (WNIGVILLFLLMATAFVGYVL), and 179-199 (FFAFHFLLPFLILALTVIHLL). Heme b is bound by residues histidine 84 and histidine 98. Histidine 183 and histidine 197 together coordinate heme b. Histidine 202 lines the a ubiquinone pocket. The next 4 helical transmembrane spans lie at 227-247 (YKDLLGFFIMIFFLATLALFM), 289-309 (LGGVLALLFSIFILMLVPLLH), 321-341 (MTQIFFWLLVANFLILTWIGG), and 348-368 (FMMVGQIASISYFALFLIIMP).

It belongs to the cytochrome b family. In terms of assembly, the cytochrome bc1 complex contains 3 respiratory subunits (MT-CYB, CYC1 and UQCRFS1), 2 core proteins (UQCRC1 and UQCRC2) and probably 6 low-molecular weight proteins. It depends on heme b as a cofactor.

Its subcellular location is the mitochondrion inner membrane. Functionally, component of the ubiquinol-cytochrome c reductase complex (complex III or cytochrome b-c1 complex) that is part of the mitochondrial respiratory chain. The b-c1 complex mediates electron transfer from ubiquinol to cytochrome c. Contributes to the generation of a proton gradient across the mitochondrial membrane that is then used for ATP synthesis. The sequence is that of Cytochrome b (mt-cyb) from Prionace glauca (Blue shark).